A 228-amino-acid polypeptide reads, in one-letter code: Sugar fermentation stimulation protein homolog (228 aa).

This sequence belongs to the SfsA family.

This chain is Sugar fermentation stimulation protein homolog, found in Desulfitobacterium hafniense (strain DSM 10664 / DCB-2).